The chain runs to 433 residues: ATP-dependent protease ATPase subunit HslU (433 aa).

ATP-binding positions include Val18, 60–65 (GVGKTE), Asp246, Glu311, and Arg383.

This sequence belongs to the ClpX chaperone family. HslU subfamily. In terms of assembly, a double ring-shaped homohexamer of HslV is capped on each side by a ring-shaped HslU homohexamer. The assembly of the HslU/HslV complex is dependent on binding of ATP.

The protein localises to the cytoplasm. Functionally, ATPase subunit of a proteasome-like degradation complex; this subunit has chaperone activity. The binding of ATP and its subsequent hydrolysis by HslU are essential for unfolding of protein substrates subsequently hydrolyzed by HslV. HslU recognizes the N-terminal part of its protein substrates and unfolds these before they are guided to HslV for hydrolysis. This is ATP-dependent protease ATPase subunit HslU from Rhodopseudomonas palustris (strain BisB5).